Here is a 383-residue protein sequence, read N- to C-terminus: Fructose-1,6-bisphosphate aldolase/phosphatase (383 aa).

D11 acts as the Proton acceptor; for FBP phosphatase activity in catalysis. Mg(2+)-binding residues include D11, H18, D52, and D53. H18 contacts beta-D-fructose 1,6-bisphosphate. H18 contacts dihydroxyacetone phosphate. Beta-D-fructose 1,6-bisphosphate is bound at residue Y90. Mg(2+) is bound at residue Q94. Residue 103–104 (GN) participates in beta-D-fructose 1,6-bisphosphate binding. Residue D131 participates in Mg(2+) binding. K132 is a beta-D-fructose 1,6-bisphosphate binding site. Residue K132 participates in dihydroxyacetone phosphate binding. Catalysis depends on Y228, which acts as the Proton donor/acceptor; for FBP aldolase activity. Mg(2+) is bound by residues K231, D232, and D233. K231 serves as the catalytic Schiff-base intermediate with DHAP; for FBP aldolase activity. Beta-D-fructose 1,6-bisphosphate-binding positions include 241-242 (QH), R265, D286, and Y347. Positions 265 and 286 each coordinate dihydroxyacetone phosphate. Residues 361–383 (FKKEEDVKKAKPSVYTSKDQGMD) are disordered. Residues 374–383 (VYTSKDQGMD) are compositionally biased toward polar residues.

The protein belongs to the FBP aldolase/phosphatase family. As to quaternary structure, homooctamer; dimer of tetramers. Requires Mg(2+) as cofactor.

It catalyses the reaction beta-D-fructose 1,6-bisphosphate + H2O = beta-D-fructose 6-phosphate + phosphate. It carries out the reaction beta-D-fructose 1,6-bisphosphate = D-glyceraldehyde 3-phosphate + dihydroxyacetone phosphate. Its pathway is carbohydrate biosynthesis; gluconeogenesis. Catalyzes two subsequent steps in gluconeogenesis: the aldol condensation of dihydroxyacetone phosphate (DHAP) and glyceraldehyde-3-phosphate (GA3P) to fructose-1,6-bisphosphate (FBP), and the dephosphorylation of FBP to fructose-6-phosphate (F6P). In Metallosphaera sedula (strain ATCC 51363 / DSM 5348 / JCM 9185 / NBRC 15509 / TH2), this protein is Fructose-1,6-bisphosphate aldolase/phosphatase.